Reading from the N-terminus, the 294-residue chain is GTPase Era (294 aa).

An Era-type G domain is found at 4–170; sequence KSGFVSVIGR…VEEIFTFLPE (167 aa). The tract at residues 12–19 is G1; the sequence is GRPNVGKS. Position 12–19 (12–19) interacts with GTP; sequence GRPNVGKS. Residues 38 to 42 are G2; it reads QTTRN. Residues 59-62 are G3; the sequence is DTPG. GTP is bound by residues 59 to 63 and 121 to 124; these read DTPGI and NKID. Positions 121-124 are G4; it reads NKID. Residues 149-151 are G5; it reads ISA. The 78-residue stretch at 201–278 folds into the KH type-2 domain; it reads TREEVPYGVA…YLDLWVKIEK (78 aa).

Belongs to the TRAFAC class TrmE-Era-EngA-EngB-Septin-like GTPase superfamily. Era GTPase family. As to quaternary structure, monomer.

The protein resides in the cytoplasm. It is found in the cell inner membrane. An essential GTPase that binds both GDP and GTP, with rapid nucleotide exchange. Plays a role in 16S rRNA processing and 30S ribosomal subunit biogenesis and possibly also in cell cycle regulation and energy metabolism. This is GTPase Era from Halothermothrix orenii (strain H 168 / OCM 544 / DSM 9562).